A 72-amino-acid polypeptide reads, in one-letter code: SRY-related protein AES4 (72 aa).

The HMG box DNA-binding region spans 1–69 (VKRPMNAFMV…KHMADYPDYK (69 aa)).

Its subcellular location is the nucleus. This Alligator mississippiensis (American alligator) protein is SRY-related protein AES4.